We begin with the raw amino-acid sequence, 130 residues long: MSMQDPIADMFTRVRNGQMASKVSVSMPSSKLRVAIAAVLKEEGYVSDFAVSGDVKPVLEVTLKYFEGKKVIESIERVSRPGLRIYKKKDELPKVLGGLGVAIVSTSKGVMTDRAARKAGMGGEIIGYVA.

The protein belongs to the universal ribosomal protein uS8 family. As to quaternary structure, part of the 30S ribosomal subunit. Contacts proteins S5 and S12.

In terms of biological role, one of the primary rRNA binding proteins, it binds directly to 16S rRNA central domain where it helps coordinate assembly of the platform of the 30S subunit. The sequence is that of Small ribosomal subunit protein uS8 from Pseudoalteromonas atlantica (strain T6c / ATCC BAA-1087).